Here is a 125-residue protein sequence, read N- to C-terminus: Large ribosomal subunit protein uL22 (125 aa).

Belongs to the universal ribosomal protein uL22 family. Part of the 50S ribosomal subunit.

In terms of biological role, this protein binds specifically to 23S rRNA; its binding is stimulated by other ribosomal proteins, e.g. L4, L17, and L20. It is important during the early stages of 50S assembly. It makes multiple contacts with different domains of the 23S rRNA in the assembled 50S subunit and ribosome. Functionally, the globular domain of the protein is located near the polypeptide exit tunnel on the outside of the subunit, while an extended beta-hairpin is found that lines the wall of the exit tunnel in the center of the 70S ribosome. In Erythrobacter litoralis (strain HTCC2594), this protein is Large ribosomal subunit protein uL22.